A 121-amino-acid polypeptide reads, in one-letter code: UPF0738 protein BLi01253/BL05110 (121 aa).

This sequence belongs to the UPF0738 family.

In Bacillus licheniformis (strain ATCC 14580 / DSM 13 / JCM 2505 / CCUG 7422 / NBRC 12200 / NCIMB 9375 / NCTC 10341 / NRRL NRS-1264 / Gibson 46), this protein is UPF0738 protein BLi01253/BL05110.